Reading from the N-terminus, the 412-residue chain is Multifunctional CCA protein (412 aa).

The ATP site is built by Gly8 and Arg11. Residues Gly8 and Arg11 each contribute to the CTP site. Residues Glu21 and Asp23 each contribute to the Mg(2+) site. The ATP site is built by Arg91, Arg137, and Arg140. CTP contacts are provided by Arg91, Arg137, and Arg140. Residues 228–329 (TGIHTLMTLA…LKLFNAIDVW (102 aa)) enclose the HD domain.

Belongs to the tRNA nucleotidyltransferase/poly(A) polymerase family. Bacterial CCA-adding enzyme type 1 subfamily. In terms of assembly, monomer. Can also form homodimers and oligomers. The cofactor is Mg(2+). Ni(2+) is required as a cofactor.

It carries out the reaction a tRNA precursor + 2 CTP + ATP = a tRNA with a 3' CCA end + 3 diphosphate. The catalysed reaction is a tRNA with a 3' CCA end + 2 CTP + ATP = a tRNA with a 3' CCACCA end + 3 diphosphate. Functionally, catalyzes the addition and repair of the essential 3'-terminal CCA sequence in tRNAs without using a nucleic acid template. Adds these three nucleotides in the order of C, C, and A to the tRNA nucleotide-73, using CTP and ATP as substrates and producing inorganic pyrophosphate. tRNA 3'-terminal CCA addition is required both for tRNA processing and repair. Also involved in tRNA surveillance by mediating tandem CCA addition to generate a CCACCA at the 3' terminus of unstable tRNAs. While stable tRNAs receive only 3'-terminal CCA, unstable tRNAs are marked with CCACCA and rapidly degraded. In Yersinia pestis, this protein is Multifunctional CCA protein.